A 304-amino-acid polypeptide reads, in one-letter code: Acetyl-coenzyme A carboxylase carboxyl transferase subunit beta (304 aa).

Positions 25-294 constitute a CoA carboxyltransferase N-terminal domain; it reads VWTKCDSCGQ…PSVVESKADT (270 aa). Zn(2+) is bound by residues Cys-29, Cys-32, Cys-48, and Cys-51. The C4-type zinc finger occupies 29–51; that stretch reads CDSCGQVLYRAELERNLEVCPKC.

This sequence belongs to the AccD/PCCB family. As to quaternary structure, acetyl-CoA carboxylase is a heterohexamer composed of biotin carboxyl carrier protein (AccB), biotin carboxylase (AccC) and two subunits each of ACCase subunit alpha (AccA) and ACCase subunit beta (AccD). Zn(2+) is required as a cofactor.

It is found in the cytoplasm. It carries out the reaction N(6)-carboxybiotinyl-L-lysyl-[protein] + acetyl-CoA = N(6)-biotinyl-L-lysyl-[protein] + malonyl-CoA. Its pathway is lipid metabolism; malonyl-CoA biosynthesis; malonyl-CoA from acetyl-CoA: step 1/1. Functionally, component of the acetyl coenzyme A carboxylase (ACC) complex. Biotin carboxylase (BC) catalyzes the carboxylation of biotin on its carrier protein (BCCP) and then the CO(2) group is transferred by the transcarboxylase to acetyl-CoA to form malonyl-CoA. In Yersinia pestis (strain Pestoides F), this protein is Acetyl-coenzyme A carboxylase carboxyl transferase subunit beta.